The chain runs to 294 residues: Probable aspartoacylase (294 aa).

Histidine 14 and glutamate 17 together coordinate Zn(2+). Substrate-binding positions include arginine 56 and 63 to 64; that span reads NR. Residue histidine 106 participates in Zn(2+) binding. Substrate contacts are provided by glutamate 164 and tyrosine 275.

Belongs to the AspA/AstE family. Aspartoacylase subfamily. Zn(2+) serves as cofactor.

The enzyme catalyses an N-acyl-L-aspartate + H2O = a carboxylate + L-aspartate. In Nostoc sp. (strain PCC 7120 / SAG 25.82 / UTEX 2576), this protein is Probable aspartoacylase.